We begin with the raw amino-acid sequence, 340 residues long: ATPase BagA (340 aa).

Gly-31, Gly-33, Lys-34, Ser-35, Thr-36, Asn-240, Pro-316, and Val-318 together coordinate ATP.

The protein belongs to the arsA ATPase family. BagA/BagB subfamily. As to quaternary structure, forms a heterodimer composed of BagA and BagB. Interacts with Rv1509. Also interacts with a large number of proteins, including proteins required for mycolic acid biosynthesis.

Its activity is regulated as follows. The ATPase activity of the BagAB complex is not stimulated by antimonite, an arsenite substitute, suggesting that BagAB is not a transporter for this family of elements. In terms of biological role, component of the heterodimeric BagAB ATPase complex, whose two subunits are actively involved in ATP hydrolysis. The ATPase activity is required to mediate resistance against nitric oxide (NO) and elevated levels of glycerol. In Mycobacterium tuberculosis (strain ATCC 25618 / H37Rv), this protein is ATPase BagA.